We begin with the raw amino-acid sequence, 264 residues long: Cell division protein FtsQ (264 aa).

A disordered region spans residues 1–24 (MAGPTTAERGDRQQESSGPPPARW). Topologically, residues 1 to 31 (MAGPTTAERGDRQQESSGPPPARWSGTRRLR) are cytoplasmic. Residues 32 to 52 (ALVVLAALLVLLAGGCAWLLY) form a helical membrane-spanning segment. The Extracellular portion of the chain corresponds to 53–264 (GSSWLRLERV…VPTAPASSGS (212 aa)). The 70-residue stretch at 57-126 (LRLERVSVSG…HGIGLKVTER (70 aa)) folds into the POTRA domain.

This sequence belongs to the FtsQ/DivIB family. FtsQ subfamily.

The protein localises to the cell membrane. Functionally, essential cell division protein. This Streptomyces collinus protein is Cell division protein FtsQ.